The sequence spans 206 residues: Imidazoleglycerol-phosphate dehydratase (206 aa).

It belongs to the imidazoleglycerol-phosphate dehydratase family.

It localises to the cytoplasm. It carries out the reaction D-erythro-1-(imidazol-4-yl)glycerol 3-phosphate = 3-(imidazol-4-yl)-2-oxopropyl phosphate + H2O. It functions in the pathway amino-acid biosynthesis; L-histidine biosynthesis; L-histidine from 5-phospho-alpha-D-ribose 1-diphosphate: step 6/9. In Cutibacterium acnes (strain DSM 16379 / KPA171202) (Propionibacterium acnes), this protein is Imidazoleglycerol-phosphate dehydratase.